Here is a 79-residue protein sequence, read N- to C-terminus: DNA-directed RNA polymerase subunit omega (79 aa).

This sequence belongs to the RNA polymerase subunit omega family. In terms of assembly, in cyanobacteria the RNAP catalytic core is composed of 2 alpha, 1 beta, 1 beta', 1 gamma and 1 omega subunit. When a sigma factor is associated with the core the holoenzyme is formed, which can initiate transcription.

It catalyses the reaction RNA(n) + a ribonucleoside 5'-triphosphate = RNA(n+1) + diphosphate. Functionally, promotes RNA polymerase assembly. Latches the N- and C-terminal regions of the beta' subunit thereby facilitating its interaction with the beta and alpha subunits. In Synechococcus sp. (strain JA-2-3B'a(2-13)) (Cyanobacteria bacterium Yellowstone B-Prime), this protein is DNA-directed RNA polymerase subunit omega.